A 355-amino-acid polypeptide reads, in one-letter code: Adenine deaminase (355 aa).

3 residues coordinate Zn(2+): His-23, His-25, and His-211. The Proton donor role is filled by Glu-214. Asp-292 is a binding site for Zn(2+). Residue Asp-293 coordinates substrate.

It belongs to the metallo-dependent hydrolases superfamily. Adenosine and AMP deaminases family. Adenine deaminase type 2 subfamily. Zn(2+) serves as cofactor.

The protein localises to the cytoplasm. It is found in the nucleus. It catalyses the reaction adenine + H2O + H(+) = hypoxanthine + NH4(+). Catalyzes the hydrolytic deamination of adenine to hypoxanthine. Plays an important role in the purine salvage pathway and in nitrogen catabolism. The chain is Adenine deaminase from Kluyveromyces lactis (strain ATCC 8585 / CBS 2359 / DSM 70799 / NBRC 1267 / NRRL Y-1140 / WM37) (Yeast).